The following is a 167-amino-acid chain: UPF0225 protein VV1358 (167 aa).

It belongs to the UPF0225 family.

This chain is UPF0225 protein VV1358, found in Vibrio vulnificus (strain YJ016).